The following is a 670-amino-acid chain: UvrABC system protein B (670 aa).

In terms of domain architecture, Helicase ATP-binding spans 51–433 (EGLKKREQFQ…SARIVEQIIR (383 aa)). 64 to 71 (GVTGSGKT) contacts ATP. The Beta-hairpin motif lies at 117–140 (YYDYYQPESYLPAKDQYIEKDAQI). The Helicase C-terminal domain maps to 453 to 612 (DVMQEIRKIV…IVPKTIRKPI (160 aa)). The region spanning 631 to 666 (PNVIIELDAEMREAADRLDFERAIQLRELIKKLEKE) is the UVR domain.

The protein belongs to the UvrB family. Forms a heterotetramer with UvrA during the search for lesions. Interacts with UvrC in an incision complex.

Its subcellular location is the cytoplasm. Its function is as follows. The UvrABC repair system catalyzes the recognition and processing of DNA lesions. A damage recognition complex composed of 2 UvrA and 2 UvrB subunits scans DNA for abnormalities. Upon binding of the UvrA(2)B(2) complex to a putative damaged site, the DNA wraps around one UvrB monomer. DNA wrap is dependent on ATP binding by UvrB and probably causes local melting of the DNA helix, facilitating insertion of UvrB beta-hairpin between the DNA strands. Then UvrB probes one DNA strand for the presence of a lesion. If a lesion is found the UvrA subunits dissociate and the UvrB-DNA preincision complex is formed. This complex is subsequently bound by UvrC and the second UvrB is released. If no lesion is found, the DNA wraps around the other UvrB subunit that will check the other stand for damage. The protein is UvrABC system protein B of Methanosarcina acetivorans (strain ATCC 35395 / DSM 2834 / JCM 12185 / C2A).